Here is a 205-residue protein sequence, read N- to C-terminus: High frequency lysogenization protein HflD homolog (205 aa).

Belongs to the HflD family.

The protein localises to the cytoplasm. Its subcellular location is the cell inner membrane. The chain is High frequency lysogenization protein HflD homolog from Aliivibrio fischeri (strain MJ11) (Vibrio fischeri).